A 97-amino-acid polypeptide reads, in one-letter code: Ferredoxin-like protein YdiT (97 aa).

It belongs to the bacterial-type ferredoxin family. FixX subfamily.

Its function is as follows. Could be a 3Fe-4S cluster-containing protein. Probably participates in a redox process with YdiQ, YdiR and YdiS. The chain is Ferredoxin-like protein YdiT (ydiT) from Escherichia coli (strain K12).